The primary structure comprises 631 residues: Probable glutamate--tRNA ligase, cytoplasmic (631 aa).

139–141 is an L-glutamate binding site; the sequence is RFP. The 'HIGH' region motif lies at 144–153; the sequence is PSGFLHIGHI. An ATP-binding site is contributed by His-149. L-glutamate contacts are provided by residues Asp-173, 311–315, and Arg-329; that span reads YDFAC. Residues Glu-332 and 367-371 each bind ATP; that span reads VLSKR. A 'KMSKS' region motif is present at residues 367–371; it reads VLSKR.

It belongs to the class-I aminoacyl-tRNA synthetase family. Glutamate--tRNA ligase type 2 subfamily.

It is found in the cytoplasm. The enzyme catalyses tRNA(Glu) + L-glutamate + ATP = L-glutamyl-tRNA(Glu) + AMP + diphosphate. This Enterocytozoon bieneusi (strain H348) (Microsporidian parasite) protein is Probable glutamate--tRNA ligase, cytoplasmic.